Here is a 695-residue protein sequence, read N- to C-terminus: UvrABC system protein B (695 aa).

The region spanning K25 to A176 is the Helicase ATP-binding domain. G38–T45 is a binding site for ATP. The Beta-hairpin signature appears at Y91–I114. The 164-residue stretch at L454–N617 folds into the Helicase C-terminal domain. The UVR domain occupies P652 to R687.

It belongs to the UvrB family. In terms of assembly, forms a heterotetramer with UvrA during the search for lesions. Interacts with UvrC in an incision complex.

It localises to the cytoplasm. Its function is as follows. The UvrABC repair system catalyzes the recognition and processing of DNA lesions. A damage recognition complex composed of 2 UvrA and 2 UvrB subunits scans DNA for abnormalities. Upon binding of the UvrA(2)B(2) complex to a putative damaged site, the DNA wraps around one UvrB monomer. DNA wrap is dependent on ATP binding by UvrB and probably causes local melting of the DNA helix, facilitating insertion of UvrB beta-hairpin between the DNA strands. Then UvrB probes one DNA strand for the presence of a lesion. If a lesion is found the UvrA subunits dissociate and the UvrB-DNA preincision complex is formed. This complex is subsequently bound by UvrC and the second UvrB is released. If no lesion is found, the DNA wraps around the other UvrB subunit that will check the other stand for damage. In Synechococcus sp. (strain JA-2-3B'a(2-13)) (Cyanobacteria bacterium Yellowstone B-Prime), this protein is UvrABC system protein B.